Reading from the N-terminus, the 657-residue chain is Methionine--tRNA ligase (657 aa).

The 'HIGH' region signature appears at 13–23; sequence YYPSGNLHIGH. A 'KMSKS' region motif is present at residues 308 to 312; the sequence is KMSKS. ATP is bound at residue K311. Positions 557 to 657 constitute a tRNA-binding domain; it reads DFDKVEIKAA…SAIPNGAVIK (101 aa).

Belongs to the class-I aminoacyl-tRNA synthetase family. MetG type 2B subfamily. Homodimer.

The protein localises to the cytoplasm. The catalysed reaction is tRNA(Met) + L-methionine + ATP = L-methionyl-tRNA(Met) + AMP + diphosphate. Is required not only for elongation of protein synthesis but also for the initiation of all mRNA translation through initiator tRNA(fMet) aminoacylation. This chain is Methionine--tRNA ligase, found in Staphylococcus aureus (strain Mu50 / ATCC 700699).